The primary structure comprises 63 residues: Non-structural protein 3b (63 aa).

In Avian infectious bronchitis virus (strain UK/183/66) (IBV), this protein is Non-structural protein 3b.